A 950-amino-acid chain; its full sequence is Protein translocase subunit SecA (950 aa).

Residues Gln87, 105–109, and Asp524 contribute to the ATP site; that span reads GEGKT. A disordered region spans residues 908–932; sequence GAAPVPAEARNPNDPSTWGKVGRNE. Zn(2+)-binding residues include Cys934, Cys936, Cys945, and His946.

Belongs to the SecA family. As to quaternary structure, monomer and homodimer. Part of the essential Sec protein translocation apparatus which comprises SecA, SecYEG and auxiliary proteins SecDF-YajC and YidC. Requires Zn(2+) as cofactor.

The protein localises to the cell inner membrane. The protein resides in the cytoplasm. The enzyme catalyses ATP + H2O + cellular proteinSide 1 = ADP + phosphate + cellular proteinSide 2.. Its function is as follows. Part of the Sec protein translocase complex. Interacts with the SecYEG preprotein conducting channel. Has a central role in coupling the hydrolysis of ATP to the transfer of proteins into and across the cell membrane, serving both as a receptor for the preprotein-SecB complex and as an ATP-driven molecular motor driving the stepwise translocation of polypeptide chains across the membrane. This chain is Protein translocase subunit SecA, found in Bradyrhizobium sp. (strain BTAi1 / ATCC BAA-1182).